The primary structure comprises 201 residues: Probable nicotinate-nucleotide adenylyltransferase (201 aa).

The protein belongs to the NadD family.

It catalyses the reaction nicotinate beta-D-ribonucleotide + ATP + H(+) = deamido-NAD(+) + diphosphate. It functions in the pathway cofactor biosynthesis; NAD(+) biosynthesis; deamido-NAD(+) from nicotinate D-ribonucleotide: step 1/1. Functionally, catalyzes the reversible adenylation of nicotinate mononucleotide (NaMN) to nicotinic acid adenine dinucleotide (NaAD). The sequence is that of Probable nicotinate-nucleotide adenylyltransferase from Neisseria gonorrhoeae (strain ATCC 700825 / FA 1090).